The sequence spans 479 residues: 6-phosphogluconate dehydrogenase, decarboxylating (479 aa).

NADP(+) is bound by residues 9 to 14, 32 to 34, 74 to 76, and Asn-102; these read GLAVMG, NRT, and IQA. Substrate contacts are provided by residues Asn-102 and 128–130; that span reads SGG. The active-site Proton acceptor is Lys-182. 185–186 serves as a coordination point for substrate; the sequence is HN. Catalysis depends on Glu-189, which acts as the Proton donor. Residues Tyr-190, Lys-259, Arg-286, Arg-446, and His-452 each coordinate substrate.

Belongs to the 6-phosphogluconate dehydrogenase family. In terms of assembly, homodimer.

It carries out the reaction 6-phospho-D-gluconate + NADP(+) = D-ribulose 5-phosphate + CO2 + NADPH. It participates in carbohydrate degradation; pentose phosphate pathway; D-ribulose 5-phosphate from D-glucose 6-phosphate (oxidative stage): step 3/3. Catalyzes the oxidative decarboxylation of 6-phosphogluconate to ribulose 5-phosphate and CO(2), with concomitant reduction of NADP to NADPH. This is 6-phosphogluconate dehydrogenase, decarboxylating (gnd) from Chlamydia pneumoniae (Chlamydophila pneumoniae).